Consider the following 1369-residue polypeptide: Mediator of RNA polymerase II transcription subunit 23 (1369 aa).

A disordered region spans residues 1337–1369; it reads TESAAPPPPPMNSGSPAPQPNQVPVSVPLTVTQ. Positions 1341–1357 are enriched in pro residues; that stretch reads APPPPPMNSGSPAPQPN.

Belongs to the Mediator complex subunit 23 family. Component of the Mediator complex.

The protein localises to the nucleus. Component of the Mediator complex, a coactivator involved in the regulated transcription of nearly all RNA polymerase II-dependent genes. Mediator functions as a bridge to convey information from gene-specific regulatory proteins to the basal RNA polymerase II transcription machinery. Mediator is recruited to promoters by direct interactions with regulatory proteins and serves as a scaffold for the assembly of a functional preinitiation complex with RNA polymerase II and the general transcription factors. The protein is Mediator of RNA polymerase II transcription subunit 23 (med23) of Xenopus laevis (African clawed frog).